We begin with the raw amino-acid sequence, 349 residues long: NAC domain-containing protein JA2 (349 aa).

Residues 14-163 (LPPGFRFYPT…EWVLCRIYKK (150 aa)) form the NAC domain. Residues 111-169 (VGIKKALVFYVGKAPKGSKTNWIMHEYRLFESSRKNNGSSKLDEWVLCRIYKKNSSGPK) mediate DNA binding. Positions 169–194 (KPLMSGLHSSNEYSHGSSTSSSSQFD) are disordered. Low complexity predominate over residues 177-191 (SSNEYSHGSSTSSSS).

In terms of tissue distribution, expressed in guard cells of the epidermis.

It is found in the nucleus. Transcription factor involved in abscisic acid-mediated stomatal closure. Regulates the expression of NCED1, a gene involved in the biosynthesis of abscisic acid (ABA). Required for the stomatal closure induced by the bacterial pathogen Pseudomonas syringae pv tomato DC3000, but not for stomatal reopening. The chain is NAC domain-containing protein JA2 from Solanum lycopersicum (Tomato).